We begin with the raw amino-acid sequence, 279 residues long: Non-structural maintenance of chromosomes element 3 homolog (279 aa).

The tract at residues 1–52 (MLQKPRGRGRPSTQADPERDWGGAGEEGPSTSRAAGGSSQGSRASLSAPTVG) is disordered. Positions 30-48 (STSRAAGGSSQGSRASLSA) are enriched in low complexity. Ser-38 carries the phosphoserine modification. The interval 52 to 279 (GPRTQKQLEL…ATASAPATSS (228 aa)) is interaction with NSMCE1. The MAGE domain maps to 59–259 (LELKVAELVQ…KDWPTQYCEA (201 aa)).

As to quaternary structure, component of the SMC5-SMC6 complex which consists at least of SMC5, SMC6, NSMCE2, NSMCE1, NSMCE4A or EID3 and NSMCE3. NSMCE1, NSMCE4A or EID3 and NSMCE3 probably form a subcomplex that bridges the head domains of the SMC5:SMC6 heterodimer. Interacts with PJA1. Interacts with E2F1 (via C-terminus). Interacts with NGFR (via C-terminus). Interacts with NSMCE1. Interacts with NSMCE4. Interacts with SMC6. Interacts with EID3. As to expression, ubiquitous.

It localises to the cytoplasm. The protein localises to the nucleus. Its subcellular location is the chromosome. The protein resides in the telomere. Component of the SMC5-SMC6 complex, a complex involved in repair of DNA double-strand breaks by homologous recombination. The complex may promote sister chromatid homologous recombination by recruiting the SMC1-SMC3 cohesin complex to double-strand breaks. The complex is required for telomere maintenance via recombination in ALT (alternative lengthening of telomeres) cell lines and mediates sumoylation of shelterin complex (telosome) components which is proposed to lead to shelterin complex disassembly in ALT-associated PML bodies (APBs). In vitro enhances ubiquitin ligase activity of NSMCE1. Proposed to act through recruitment and/or stabilization of the Ubl-conjugating enzyme (E2) at the E3:substrate complex. May be a growth suppressor that facilitates the entry of the cell into cell cycle arrest. This is Non-structural maintenance of chromosomes element 3 homolog (Nsmce3) from Mus musculus (Mouse).